A 552-amino-acid polypeptide reads, in one-letter code: 4-coumarate--CoA ligase-like 3 (552 aa).

Serine 207, serine 208, glycine 209, threonine 210, threonine 211, and lysine 215 together coordinate ATP. Phenylalanine 252 is a (E)-4-coumaroyl-AMP binding site. Position 273 (arginine 273) interacts with CoA. The interval 275 to 346 is SBD1; the sequence is GLDDMMQAVE…EKYPTVNIFQ (72 aa). The (E)-4-coumaroyl-AMP site is built by glycine 324, glutamine 346, glycine 347, and threonine 351. Glutamine 346, glycine 347, threonine 351, aspartate 432, and arginine 447 together coordinate ATP. The SBD2 stretch occupies residues 347-411; that stretch reads GYALTESHGS…LKGPSISKGY (65 aa). Residues lysine 449 and lysine 453 each coordinate (E)-4-coumaroyl-AMP. Residues lysine 455 and glycine 456 each coordinate CoA. Lysine 538 serves as a coordination point for ATP. Positions 550-552 match the Microbody targeting signal motif; it reads SKL.

Belongs to the ATP-dependent AMP-binding enzyme family. Mg(2+) is required as a cofactor.

It is found in the peroxisome. The enzyme catalyses (E)-4-coumarate + ATP + CoA = (E)-4-coumaroyl-CoA + AMP + diphosphate. The catalysed reaction is (E)-4-coumarate + ATP + H(+) = (E)-4-coumaroyl-AMP + diphosphate. It catalyses the reaction (E)-4-coumaroyl-AMP + CoA = (E)-4-coumaroyl-CoA + AMP + H(+). Its function is as follows. Carboxylate--CoA ligase that may use 4-coumarate as substrate. Follows a two-step reaction mechanism, wherein the carboxylate substrate first undergoes adenylation by ATP, followed by a thioesterification in the presence of CoA to yield the final CoA thioester. This is 4-coumarate--CoA ligase-like 3 from Arabidopsis thaliana (Mouse-ear cress).